A 418-amino-acid polypeptide reads, in one-letter code: Voltage-gated ClC-type chloride channel ClcB (418 aa).

10 helical membrane passes run 5–25 (LLIATVVGILAAFAVAGFRHA), 54–74 (LLTPALGGLAAGLLLMGWQKF), 146–166 (LWIACGAAAGMAAAYRAPLAG), 168–188 (LFIAEVLFGTMMLASLGPVII), 222–242 (ALIISTGVLAGLCGPLLLTLM), 258–278 (WQLALGGLIVGLLSLFTPAVW), 291–311 (APPLLMIIAGIFLCKLCAVLA), 316–336 (GAPGGVFTPTLFIGLAIGMLY), 352–372 (LLLGLTGMATLLAATTHAPIM), and 380–400 (MTGEYQLLPGLLIACVIASVI).

This sequence belongs to the chloride channel (TC 2.A.49) family. ClcB subfamily.

It is found in the cell inner membrane. Its function is as follows. Probably acts as an electrical shunt for an outwardly-directed proton pump that is linked to amino acid decarboxylation, as part of the extreme acid resistance (XAR) response. This is Voltage-gated ClC-type chloride channel ClcB from Escherichia coli (strain ATCC 8739 / DSM 1576 / NBRC 3972 / NCIMB 8545 / WDCM 00012 / Crooks).